The chain runs to 137 residues: Nucleoside diphosphate kinase (137 aa).

The ATP site is built by Lys-9, Phe-57, Arg-85, Thr-91, Arg-102, and Asn-112. His-115 (pros-phosphohistidine intermediate) is an active-site residue.

Belongs to the NDK family. In terms of assembly, homotetramer. It depends on Mg(2+) as a cofactor.

It is found in the cytoplasm. It carries out the reaction a 2'-deoxyribonucleoside 5'-diphosphate + ATP = a 2'-deoxyribonucleoside 5'-triphosphate + ADP. The enzyme catalyses a ribonucleoside 5'-diphosphate + ATP = a ribonucleoside 5'-triphosphate + ADP. In terms of biological role, major role in the synthesis of nucleoside triphosphates other than ATP. The ATP gamma phosphate is transferred to the NDP beta phosphate via a ping-pong mechanism, using a phosphorylated active-site intermediate. The polypeptide is Nucleoside diphosphate kinase (Pelobacter propionicus (strain DSM 2379 / NBRC 103807 / OttBd1)).